Here is a 214-residue protein sequence, read N- to C-terminus: Large ribosomal subunit protein uL6m (214 aa).

Residues 1–16 constitute a mitochondrion transit peptide; the sequence is MSFIQRRLLSQTLFLR.

Belongs to the universal ribosomal protein uL6 family. As to quaternary structure, component of the mitochondrial large ribosomal subunit (mt-LSU). Mature yeast 74S mitochondrial ribosomes consist of a small (37S) and a large (54S) subunit. The 37S small subunit contains a 15S ribosomal RNA (15S mt-rRNA) and 34 different proteins. The 54S large subunit contains a 21S rRNA (21S mt-rRNA) and 46 different proteins.

The protein resides in the mitochondrion. Functionally, component of the mitochondrial ribosome (mitoribosome), a dedicated translation machinery responsible for the synthesis of mitochondrial genome-encoded proteins, including at least some of the essential transmembrane subunits of the mitochondrial respiratory chain. The mitoribosomes are attached to the mitochondrial inner membrane and translation products are cotranslationally integrated into the membrane. This is Large ribosomal subunit protein uL6m (MRPL6) from Saccharomyces cerevisiae (strain ATCC 204508 / S288c) (Baker's yeast).